We begin with the raw amino-acid sequence, 607 residues long: Autophagy-related protein 16-1 (607 aa).

An interaction with ATG5 region spans residues 13–43 (WKRHISEQLRRRDRLQRQAFEEIILQYNKLL). Residues 79-230 (DSQLQEMAQL…QKELAEAAKE (152 aa)) are a coiled coil. Ser139 carries the post-translational modification Phosphoserine. The segment at 207–230 (AENEKDSRRRQARLQKELAEAAKE) is WIPI2-binding. The tract at residues 230–242 (EPLPVEQDDDIEV) is RB1CC1-binding. Ser269 and Ser287 each carry phosphoserine. Residues 296-299 (DNVD) carry the Caspase cleavage motif. 7 WD repeats span residues 320 to 359 (AHDG…CEFK), 364 to 403 (GSNA…LRHT), 406 to 445 (GHSG…CIKT), 447 to 484 (FAGS…IVRE), 486 to 525 (ELLG…IKQT), 532 to 573 (KCGS…KVLS), and 575 to 607 (QHSS…WAQY).

This sequence belongs to the WD repeat ATG16 family. Homodimer. Homooligomer. Heterooligomer with ATG16L2. Interacts with WIPI1. Interacts with WIPI2. Interacts with RB1CC1; the interaction is required for ULK1 complex-dependent autophagy. Interacts with ATG5. Part of the minor complex composed of 4 sets of ATG12-ATG5 and ATG16L1 (400 kDa); this complex interacts with ATG3 leading to disruption of ATG7 interaction and promotion of ATG8-like proteins lipidation. Part of the major complex composed of 8 sets of ATG12-ATG5 and ATG16L1 (800 kDa). Interacts with RAB33B (GTP- and GDP-bound forms); the complex consists of a tetramer where two RAB33B molecules bind independently one molecule of the ATG16L1 homodimer; the interaction promotes ATG12-ATG5-ATG16L1 complex recruitment to phagophores. Interacts (via WD repeats) with TMEM59; the interaction mediates unconventional autophagic activity of TMEM59. Interacts with TLR2. Interacts (via WD repeats) with MEFV. Interacts with PPP1CA; the interaction dephosphorylates ATG16L1 causing dissociation of ATG12-ATG5-ATG16L1 complex. Interacts (via N-terminal) with CLTC. Interacts with NOD1. Interacts with NOD2. Interacts with TUFM. Interacts with TRIM16. Interacts (via WD repeats) with SPATA33. Interacts with IRGM. In terms of processing, proteolytic cleavage by activated CASP3 leads to degradation and may regulate autophagy upon cellular stress and apoptotic stimuli. Post-translationally, phosphorylation at Ser-139 promotes association with the ATG12-ATG5 conjugate to form the ATG12-ATG5-ATG16L1 complex.

It is found in the cytoplasm. It localises to the preautophagosomal structure membrane. The protein localises to the endosome membrane. The protein resides in the lysosome membrane. Its function is as follows. Plays an essential role in both canonical and non-canonical autophagy: interacts with ATG12-ATG5 to mediate the lipidation to ATG8 family proteins (MAP1LC3A, MAP1LC3B, MAP1LC3C, GABARAPL1, GABARAPL2 and GABARAP). Acts as a molecular hub, coordinating autophagy pathways via distinct domains that support either canonical or non-canonical signaling. During canonical autophagy, interacts with ATG12-ATG5 to mediate the conjugation of phosphatidylethanolamine (PE) to ATG8 proteins, to produce a membrane-bound activated form of ATG8. Thereby, controls the elongation of the nascent autophagosomal membrane. As part of the ATG8 conjugation system with ATG5 and ATG12, required for recruitment of LRRK2 to stressed lysosomes and induction of LRRK2 kinase activity in response to lysosomal stress. Also involved in non-canonical autophagy, a parallel pathway involving conjugation of ATG8 proteins to single membranes at endolysosomal compartments, probably by catalyzing conjugation of phosphatidylserine (PS) to ATG8. Non-canonical autophagy plays a key role in epithelial cells to limit lethal infection by influenza A (IAV) virus. Regulates mitochondrial antiviral signaling (MAVS)-dependent type I interferon (IFN-I) production. Negatively regulates NOD1- and NOD2-driven inflammatory cytokine response. Instead, promotes an autophagy-dependent antibacterial pathway together with NOD1 or NOD2. Plays a role in regulating morphology and function of Paneth cell. The polypeptide is Autophagy-related protein 16-1 (Pongo abelii (Sumatran orangutan)).